The sequence spans 160 residues: SsrA-binding protein (160 aa).

It belongs to the SmpB family.

Its subcellular location is the cytoplasm. Functionally, required for rescue of stalled ribosomes mediated by trans-translation. Binds to transfer-messenger RNA (tmRNA), required for stable association of tmRNA with ribosomes. tmRNA and SmpB together mimic tRNA shape, replacing the anticodon stem-loop with SmpB. tmRNA is encoded by the ssrA gene; the 2 termini fold to resemble tRNA(Ala) and it encodes a 'tag peptide', a short internal open reading frame. During trans-translation Ala-aminoacylated tmRNA acts like a tRNA, entering the A-site of stalled ribosomes, displacing the stalled mRNA. The ribosome then switches to translate the ORF on the tmRNA; the nascent peptide is terminated with the 'tag peptide' encoded by the tmRNA and targeted for degradation. The ribosome is freed to recommence translation, which seems to be the essential function of trans-translation. The polypeptide is SsrA-binding protein (Mycobacterium bovis (strain ATCC BAA-935 / AF2122/97)).